Reading from the N-terminus, the 203-residue chain is MGSYETELNLRATELRLGLPGSDEPQEKRPCSGSVVRSSNKRSSPELEESRCKSNINSDSSDSTTTSDHNEDSVQPAKVQVVGWPPIRSFRKNSLQQKKVEQGDGTGMYLKVSMAGAPYLRKIDLKVYKSYPELLKALQNLFKCTFGEYSEREGYNGSEYAPTYEDKDGDWMLVGDVPWNMFVSSCKRLRIIKGSEAKGLGCL.

Residues 15 to 19 carry the EAR-like (transcriptional repression) motif; the sequence is LRLGL. The segment at 15–77 is disordered; it reads LRLGLPGSDE…DHNEDSVQPA (63 aa). The segment covering 43-52 has biased composition (basic and acidic residues); sequence SSPELEESRC. The span at 58–67 shows a compositional bias: low complexity; the sequence is SDSSDSTTTS. Positions 107–199 constitute a PB1 domain; it reads GMYLKVSMAG…RIIKGSEAKG (93 aa).

Belongs to the Aux/IAA family. As to quaternary structure, homodimers and heterodimers.

The protein localises to the nucleus. Functionally, aux/IAA proteins are short-lived transcriptional factors that function as repressors of early auxin response genes at low auxin concentrations. Repression is thought to result from the interaction with auxin response factors (ARFs), proteins that bind to the auxin-responsive promoter element (AuxRE). Formation of heterodimers with ARF proteins may alter their ability to modulate early auxin response genes expression. The sequence is that of Auxin-induced protein 22E (AUX22E) from Vigna radiata var. radiata (Mung bean).